Reading from the N-terminus, the 192-residue chain is Signal peptidase complex catalytic subunit sec11 (192 aa).

Residues 1 to 18 (MLSFLSSNLSSTRQSLAQ) lie on the Cytoplasmic side of the membrane. The chain crosses the membrane as a helical; Signal-anchor for type II membrane protein span at residues 19–39 (VLNFALVLSTAFMLWKGLSVF). Over 40 to 192 (TASSSPIVVV…GLMVILQREQ (153 aa)) the chain is Lumenal. Catalysis depends on charge relay system residues Ser53, His92, and Asp133. Residues 177 to 188 (VLLGIMGLMVIL) are C-terminal short (CTS) helix.

It belongs to the peptidase S26B family. In terms of assembly, component of the signal peptidase complex (SPC) composed of a catalytic subunit SEC11 and three accessory subunits SPC1, SPC2 and SPC3. The complex induces a local thinning of the ER membrane which is used to measure the length of the signal peptide (SP) h-region of protein substrates. This ensures the selectivity of the complex towards h-regions shorter than 18-20 amino acids. SPC associates with the translocon complex.

Its subcellular location is the endoplasmic reticulum membrane. It carries out the reaction Cleavage of hydrophobic, N-terminal signal or leader sequences from secreted and periplasmic proteins.. In terms of biological role, catalytic component of the signal peptidase complex (SPC) which catalyzes the cleavage of N-terminal signal sequences from nascent proteins as they are translocated into the lumen of the endoplasmic reticulum. Specifically cleaves N-terminal signal peptides that contain a hydrophobic alpha-helix (h-region) shorter than 18-20 amino acids. This is Signal peptidase complex catalytic subunit sec11 (sec11) from Neosartorya fischeri (strain ATCC 1020 / DSM 3700 / CBS 544.65 / FGSC A1164 / JCM 1740 / NRRL 181 / WB 181) (Aspergillus fischerianus).